Reading from the N-terminus, the 183-residue chain is Small ribosomal subunit protein uS4c (183 aa).

The region spanning 82 to 143 is the S4 RNA-binding domain; that stretch reads MRLDNILFRL…KQRSKALIQN (62 aa).

This sequence belongs to the universal ribosomal protein uS4 family. In terms of assembly, part of the 30S ribosomal subunit. Contacts protein S5. The interaction surface between S4 and S5 is involved in control of translational fidelity.

It is found in the plastid. Its subcellular location is the chloroplast. One of the primary rRNA binding proteins, it binds directly to 16S rRNA where it nucleates assembly of the body of the 30S subunit. Functionally, with S5 and S12 plays an important role in translational accuracy. The protein is Small ribosomal subunit protein uS4c (rps4) of Aristea capitata.